Here is a 610-residue protein sequence, read N- to C-terminus: Chaperone protein DnaK (610 aa).

Thr173 bears the Phosphothreonine; by autocatalysis mark. Residues 579–592 (QQQQAQGANAGQNN) show a composition bias toward low complexity. Positions 579 to 610 (QQQQAQGANAGQNNDSTVEDAEFKEVKDDDKK) are disordered. The span at 599–610 (AEFKEVKDDDKK) shows a compositional bias: basic and acidic residues.

The protein belongs to the heat shock protein 70 family.

Acts as a chaperone. In Staphylococcus aureus (strain bovine RF122 / ET3-1), this protein is Chaperone protein DnaK.